We begin with the raw amino-acid sequence, 288 residues long: Cyclin-dependent kinase 2 homolog (288 aa).

One can recognise a Protein kinase domain in the interval 4–284 (YHGLEKIGEG…AKQALEHAYF (281 aa)). ATP contacts are provided by residues 10-18 (IGEGTYGVV) and K32. T14 bears the Phosphothreonine mark. The residue at position 15 (Y15) is a Phosphotyrosine. D125 serves as the catalytic Proton acceptor. T158 bears the Phosphothreonine mark.

The protein belongs to the protein kinase superfamily. CMGC Ser/Thr protein kinase family. CDC2/CDKX subfamily. May form a complex composed of at least the catalytic subunit CRK2 and a cyclin. Mg(2+) serves as cofactor.

Its subcellular location is the cytoplasm. It carries out the reaction L-seryl-[protein] + ATP = O-phospho-L-seryl-[protein] + ADP + H(+). It catalyses the reaction L-threonyl-[protein] + ATP = O-phospho-L-threonyl-[protein] + ADP + H(+). The catalysed reaction is [DNA-directed RNA polymerase] + ATP = phospho-[DNA-directed RNA polymerase] + ADP + H(+). Phosphorylation at Thr-14 or Tyr-15 inactivates the enzyme, while phosphorylation at Thr-158 activates it. Serine/threonine-protein kinase. Involved in the control of the cell cycle. Required for entry into S-phase and mitosis. Probable component of the kinase complex that phosphorylates the repetitive C-terminus of RNA polymerase II. The chain is Cyclin-dependent kinase 2 homolog from Plasmodium vivax.